Here is a 451-residue protein sequence, read N- to C-terminus: Probable plasmid replicative DNA helicase (451 aa).

The 258-residue stretch at 194–451 (QNSFFDAFPT…SKFSAIKKVW (258 aa)) folds into the SF4 helicase domain. 225-232 (ARPSIGKT) is a binding site for ATP.

It belongs to the helicase family. DnaB subfamily. In terms of assembly, homohexamer.

The enzyme catalyses Couples ATP hydrolysis with the unwinding of duplex DNA at the replication fork by translocating in the 5'-3' direction. This creates two antiparallel DNA single strands (ssDNA). The leading ssDNA polymer is the template for DNA polymerase III holoenzyme which synthesizes a continuous strand.. It catalyses the reaction ATP + H2O = ADP + phosphate + H(+). A replicative DNA helicase, it participates in initiation and elongation during DNA replication. Travels ahead of the DNA replisome, separating dsDNA into templates for DNA synthesis. A processive ATP-dependent 5'-3' DNA helicase it has DNA-dependent ATPase activity. In terms of biological role, the plasmid this protein is encoded on is thought to be required for growth within mammalian cells. This chain is Probable plasmid replicative DNA helicase, found in Chlamydia trachomatis serovar L2 (strain ATCC VR-902B / DSM 19102 / 434/Bu).